We begin with the raw amino-acid sequence, 232 residues long: Ubiquinone biosynthesis O-methyltransferase (232 aa).

Residues Arg36, Gly55, Asp76, and Leu120 each contribute to the S-adenosyl-L-methionine site.

It belongs to the methyltransferase superfamily. UbiG/COQ3 family.

The enzyme catalyses a 3-demethylubiquinol + S-adenosyl-L-methionine = a ubiquinol + S-adenosyl-L-homocysteine + H(+). It catalyses the reaction a 3-(all-trans-polyprenyl)benzene-1,2-diol + S-adenosyl-L-methionine = a 2-methoxy-6-(all-trans-polyprenyl)phenol + S-adenosyl-L-homocysteine + H(+). The protein operates within cofactor biosynthesis; ubiquinone biosynthesis. Its function is as follows. O-methyltransferase that catalyzes the 2 O-methylation steps in the ubiquinone biosynthetic pathway. In Azotobacter vinelandii (strain DJ / ATCC BAA-1303), this protein is Ubiquinone biosynthesis O-methyltransferase.